Here is a 130-residue protein sequence, read N- to C-terminus: Small ribosomal subunit protein uS11 (130 aa).

This sequence belongs to the universal ribosomal protein uS11 family. In terms of assembly, part of the 30S ribosomal subunit. Interacts with proteins S7 and S18. Binds to IF-3.

Functionally, located on the platform of the 30S subunit, it bridges several disparate RNA helices of the 16S rRNA. Forms part of the Shine-Dalgarno cleft in the 70S ribosome. This chain is Small ribosomal subunit protein uS11, found in Prochlorococcus marinus (strain NATL1A).